Reading from the N-terminus, the 309-residue chain is Ornithine carbamoyltransferase (309 aa).

Carbamoyl phosphate contacts are provided by residues 52–55 (STRT), Gln-79, Arg-103, and 130–133 (HPCQ). Residues Asn-161, Asp-221, and 225 to 226 (SM) each bind L-ornithine. Carbamoyl phosphate contacts are provided by residues 261 to 262 (CL) and Arg-289.

Belongs to the aspartate/ornithine carbamoyltransferase superfamily. OTCase family.

Its subcellular location is the cytoplasm. The catalysed reaction is carbamoyl phosphate + L-ornithine = L-citrulline + phosphate + H(+). The protein operates within amino-acid biosynthesis; L-arginine biosynthesis; L-arginine from L-ornithine and carbamoyl phosphate: step 1/3. Functionally, reversibly catalyzes the transfer of the carbamoyl group from carbamoyl phosphate (CP) to the N(epsilon) atom of ornithine (ORN) to produce L-citrulline. The chain is Ornithine carbamoyltransferase from Methanoculleus marisnigri (strain ATCC 35101 / DSM 1498 / JR1).